A 137-amino-acid chain; its full sequence is Early nodulin-55-1 (137 aa).

The 67-residue stretch at 1–67 (KYDERTESVH…GLKLMVVVMS (67 aa)) folds into the Phytocyanin domain. Residues Asn13, Asn51, and Asn68 are each glycosylated (N-linked (GlcNAc...) asparagine). Cys20 and Cys55 are disulfide-bonded. The segment at 70 to 115 (TKKKLIHSPSPSSPSPSPSPSPSPSPSPSPSLSSPSPSPLPNNQGV) is disordered. A compositionally biased stretch (pro residues) spans 80–98 (PSSPSPSPSPSPSPSPSPS).

Belongs to the early nodulin-like (ENODL) family.

The protein localises to the symbiosome. It is found in the peribacteroid membrane. May act as a carbohydrate transporter. In Glycine max (Soybean), this protein is Early nodulin-55-1.